The primary structure comprises 1118 residues: DNA mismatch repair protein MSH1, mitochondrial (1118 aa).

768-775 (GPNGGGKS) contacts ATP.

It belongs to the DNA mismatch repair MutS family.

The protein resides in the mitochondrion. It localises to the plastid. It is found in the chloroplast. DNA mismatch repair protein specifically involved in maintenance of mitochondrial genome configuration by controlling specific rearranged portion. Functions by suppressing asymmetric recombination at some repeat pairs. The polypeptide is DNA mismatch repair protein MSH1, mitochondrial (MSH1) (Arabidopsis thaliana (Mouse-ear cress)).